The following is a 314-amino-acid chain: Acetyl-coenzyme A carboxylase carboxyl transferase subunit alpha (314 aa).

The CoA carboxyltransferase C-terminal domain occupies 32–289 (EIDMLEASLK…KKMFLKHLNE (258 aa)).

This sequence belongs to the AccA family. In terms of assembly, acetyl-CoA carboxylase is a heterohexamer composed of biotin carboxyl carrier protein (AccB), biotin carboxylase (AccC) and two subunits each of ACCase subunit alpha (AccA) and ACCase subunit beta (AccD).

It localises to the cytoplasm. It carries out the reaction N(6)-carboxybiotinyl-L-lysyl-[protein] + acetyl-CoA = N(6)-biotinyl-L-lysyl-[protein] + malonyl-CoA. It participates in lipid metabolism; malonyl-CoA biosynthesis; malonyl-CoA from acetyl-CoA: step 1/1. Component of the acetyl coenzyme A carboxylase (ACC) complex. First, biotin carboxylase catalyzes the carboxylation of biotin on its carrier protein (BCCP) and then the CO(2) group is transferred by the carboxyltransferase to acetyl-CoA to form malonyl-CoA. The chain is Acetyl-coenzyme A carboxylase carboxyl transferase subunit alpha from Staphylococcus epidermidis (strain ATCC 12228 / FDA PCI 1200).